The sequence spans 338 residues: MSDRLKPLIGTAATRPLSREEAEFAFECLFEGEATPAQMGGLLMALRTRGETVDEYAAAASVMRAKCHKVRAPNGAIDIVGTGGDGKGTLNISTATAFVVAGAGVPVAKHGNRNLSSKSGAADALTEMGLNVMIGPEQVEACLMEAGIGFMMAPMHHPAMRHVGPVRAELGTRTIFNILGPLTNPAGVKRQLTGAFSPDLIRPMAEVLSALGSEKAWLVHGGDGTDELAISAASKVAALEGGQIREFELHPEEAGLPVHPFEEIVGGTPAENAQAFRALLDGAPGAYRDAVLLNAAAALVVADRAAHLREGVEIATDSILSGAAKAKVALLARLTNAA.

5-phospho-alpha-D-ribose 1-diphosphate contacts are provided by residues glycine 81, glycine 84–aspartate 85, threonine 89, asparagine 91–threonine 94, lysine 109–serine 117, and alanine 121. Glycine 81 provides a ligand contact to anthranilate. Serine 93 contributes to the Mg(2+) binding site. Asparagine 112 serves as a coordination point for anthranilate. Arginine 167 contributes to the anthranilate binding site. Residues aspartate 226 and glutamate 227 each coordinate Mg(2+).

This sequence belongs to the anthranilate phosphoribosyltransferase family. As to quaternary structure, homodimer. The cofactor is Mg(2+).

The catalysed reaction is N-(5-phospho-beta-D-ribosyl)anthranilate + diphosphate = 5-phospho-alpha-D-ribose 1-diphosphate + anthranilate. It participates in amino-acid biosynthesis; L-tryptophan biosynthesis; L-tryptophan from chorismate: step 2/5. In terms of biological role, catalyzes the transfer of the phosphoribosyl group of 5-phosphorylribose-1-pyrophosphate (PRPP) to anthranilate to yield N-(5'-phosphoribosyl)-anthranilate (PRA). This is Anthranilate phosphoribosyltransferase from Cereibacter sphaeroides (strain ATCC 17029 / ATH 2.4.9) (Rhodobacter sphaeroides).